Here is a 411-residue protein sequence, read N- to C-terminus: Serine--tRNA ligase (411 aa).

226–228 (TSE) serves as a coordination point for L-serine. Residue 257–259 (RKE) coordinates ATP. Residue glutamate 280 coordinates L-serine. Position 344–347 (344–347 (EISS)) interacts with ATP. Serine 379 lines the L-serine pocket.

Belongs to the class-II aminoacyl-tRNA synthetase family. Type-1 seryl-tRNA synthetase subfamily. In terms of assembly, homodimer. The tRNA molecule binds across the dimer.

Its subcellular location is the cytoplasm. The enzyme catalyses tRNA(Ser) + L-serine + ATP = L-seryl-tRNA(Ser) + AMP + diphosphate + H(+). The catalysed reaction is tRNA(Sec) + L-serine + ATP = L-seryl-tRNA(Sec) + AMP + diphosphate + H(+). It participates in aminoacyl-tRNA biosynthesis; selenocysteinyl-tRNA(Sec) biosynthesis; L-seryl-tRNA(Sec) from L-serine and tRNA(Sec): step 1/1. In terms of biological role, catalyzes the attachment of serine to tRNA(Ser). Is also able to aminoacylate tRNA(Sec) with serine, to form the misacylated tRNA L-seryl-tRNA(Sec), which will be further converted into selenocysteinyl-tRNA(Sec). This is Serine--tRNA ligase from Campylobacter jejuni subsp. jejuni serotype O:6 (strain 81116 / NCTC 11828).